The sequence spans 151 residues: Peptide methionine sulfoxide reductase MsrB (151 aa).

The MsrB domain occupies lysine 5–lysine 127. Cysteine 116 functions as the Nucleophile in the catalytic mechanism.

Belongs to the MsrB Met sulfoxide reductase family.

The enzyme catalyses L-methionyl-[protein] + [thioredoxin]-disulfide + H2O = L-methionyl-(R)-S-oxide-[protein] + [thioredoxin]-dithiol. This chain is Peptide methionine sulfoxide reductase MsrB, found in Bacillus licheniformis (strain ATCC 14580 / DSM 13 / JCM 2505 / CCUG 7422 / NBRC 12200 / NCIMB 9375 / NCTC 10341 / NRRL NRS-1264 / Gibson 46).